Reading from the N-terminus, the 198-residue chain is Small ribosomal subunit protein uS7 (198 aa).

The protein belongs to the universal ribosomal protein uS7 family. Part of the 30S ribosomal subunit.

Its function is as follows. One of the primary rRNA binding proteins, it binds directly to 16S rRNA where it nucleates assembly of the head domain of the 30S subunit. Is located at the subunit interface close to the decoding center. The protein is Small ribosomal subunit protein uS7 of Desulfurococcus amylolyticus (strain DSM 18924 / JCM 16383 / VKM B-2413 / 1221n) (Desulfurococcus kamchatkensis).